Reading from the N-terminus, the 593-residue chain is Maternal uncoordinated protein 2 (593 aa).

The protein belongs to the SCC4/mau-2 family. In terms of assembly, may heterodimerize with scc-2/SCC2 to form the cohesin loading complex.

The protein localises to the nucleus. It localises to the nucleoplasm. It is found in the cytoplasm. In terms of biological role, plays an important role in the loading of the cohesin complex on to DNA. Forms a heterodimeric complex (also known as cohesin loading complex) with scc-2/SCC2 which mediates the loading of the cohesin complex onto chromatin. Required for normal development until the fourth larval stage. Functions cell autonomously to guide migrations during the development of the nervous system. Participates in the guidance of mechanosensory neuron AVM by a slt-1-independent mechanism. Regulates chromosome segregation in early embryos. In Caenorhabditis elegans, this protein is Maternal uncoordinated protein 2.